Here is a 437-residue protein sequence, read N- to C-terminus: Xylose isomerase (437 aa).

Catalysis depends on residues histidine 101 and aspartate 104. Residues glutamate 232, glutamate 268, histidine 271, aspartate 296, aspartate 307, aspartate 309, and aspartate 339 each coordinate Mg(2+).

Belongs to the xylose isomerase family. As to quaternary structure, homotetramer. It depends on Mg(2+) as a cofactor.

Its subcellular location is the cytoplasm. It catalyses the reaction alpha-D-xylose = alpha-D-xylulofuranose. The sequence is that of Xylose isomerase from Mannheimia succiniciproducens (strain KCTC 0769BP / MBEL55E).